Consider the following 69-residue polypeptide: UPF0337 protein YjbJ (69 aa).

Belongs to the UPF0337 (CsbD) family.

This Escherichia coli O6:H1 (strain CFT073 / ATCC 700928 / UPEC) protein is UPF0337 protein YjbJ (yjbJ).